The primary structure comprises 368 residues: 1-deoxy-D-xylulose 5-phosphate reductoisomerase (368 aa).

NADPH is bound by residues T7, G8, S9, I10, G31, K32, N33, and N113. K114 provides a ligand contact to 1-deoxy-D-xylulose 5-phosphate. E115 contacts NADPH. D133 contributes to the Mn(2+) binding site. Residues S134, E135, S158, and H181 each contribute to the 1-deoxy-D-xylulose 5-phosphate site. E135 serves as a coordination point for Mn(2+). Residue G187 coordinates NADPH. Residues S194, N199, K200, and E203 each coordinate 1-deoxy-D-xylulose 5-phosphate. E203 is a Mn(2+) binding site.

Belongs to the DXR family. It depends on Mg(2+) as a cofactor. Mn(2+) is required as a cofactor.

The enzyme catalyses 2-C-methyl-D-erythritol 4-phosphate + NADP(+) = 1-deoxy-D-xylulose 5-phosphate + NADPH + H(+). Its pathway is isoprenoid biosynthesis; isopentenyl diphosphate biosynthesis via DXP pathway; isopentenyl diphosphate from 1-deoxy-D-xylulose 5-phosphate: step 1/6. Functionally, catalyzes the NADPH-dependent rearrangement and reduction of 1-deoxy-D-xylulose-5-phosphate (DXP) to 2-C-methyl-D-erythritol 4-phosphate (MEP). The polypeptide is 1-deoxy-D-xylulose 5-phosphate reductoisomerase (Helicobacter pylori (strain P12)).